Reading from the N-terminus, the 311-residue chain is Ribosomal RNA small subunit methyltransferase H (311 aa).

S-adenosyl-L-methionine contacts are provided by residues 34–36 (GGH), Asp54, Phe78, Asp100, and Gln107.

It belongs to the methyltransferase superfamily. RsmH family.

The protein resides in the cytoplasm. The catalysed reaction is cytidine(1402) in 16S rRNA + S-adenosyl-L-methionine = N(4)-methylcytidine(1402) in 16S rRNA + S-adenosyl-L-homocysteine + H(+). Its function is as follows. Specifically methylates the N4 position of cytidine in position 1402 (C1402) of 16S rRNA. The polypeptide is Ribosomal RNA small subunit methyltransferase H (Hamiltonella defensa subsp. Acyrthosiphon pisum (strain 5AT)).